A 248-amino-acid polypeptide reads, in one-letter code: 4-hydroxy-tetrahydrodipicolinate reductase (248 aa).

NAD(+) is bound by residues Asp-32, 74–76, and 99–102; these read GTT and SANF. His-134 (proton donor/acceptor) is an active-site residue. His-135 serves as a coordination point for (S)-2,3,4,5-tetrahydrodipicolinate. Catalysis depends on Lys-138, which acts as the Proton donor. (S)-2,3,4,5-tetrahydrodipicolinate is bound at residue 144 to 145; sequence GT.

This sequence belongs to the DapB family.

It localises to the cytoplasm. It catalyses the reaction (S)-2,3,4,5-tetrahydrodipicolinate + NAD(+) + H2O = (2S,4S)-4-hydroxy-2,3,4,5-tetrahydrodipicolinate + NADH + H(+). It carries out the reaction (S)-2,3,4,5-tetrahydrodipicolinate + NADP(+) + H2O = (2S,4S)-4-hydroxy-2,3,4,5-tetrahydrodipicolinate + NADPH + H(+). Its pathway is amino-acid biosynthesis; L-lysine biosynthesis via DAP pathway; (S)-tetrahydrodipicolinate from L-aspartate: step 4/4. In terms of biological role, catalyzes the conversion of 4-hydroxy-tetrahydrodipicolinate (HTPA) to tetrahydrodipicolinate. The sequence is that of 4-hydroxy-tetrahydrodipicolinate reductase from Chlorobium limicola (strain DSM 245 / NBRC 103803 / 6330).